The chain runs to 78 residues: Protein FAM240B (78 aa).

It belongs to the FAM240 family.

The polypeptide is Protein FAM240B (Homo sapiens (Human)).